Here is a 140-residue protein sequence, read N- to C-terminus: Nucleoside diphosphate kinase (140 aa).

Lys11, Phe59, Arg87, Thr93, Arg104, and Asn114 together coordinate ATP. His117 serves as the catalytic Pros-phosphohistidine intermediate.

The protein belongs to the NDK family. As to quaternary structure, homotetramer. It depends on Mg(2+) as a cofactor.

It localises to the cytoplasm. It catalyses the reaction a 2'-deoxyribonucleoside 5'-diphosphate + ATP = a 2'-deoxyribonucleoside 5'-triphosphate + ADP. The catalysed reaction is a ribonucleoside 5'-diphosphate + ATP = a ribonucleoside 5'-triphosphate + ADP. In terms of biological role, major role in the synthesis of nucleoside triphosphates other than ATP. The ATP gamma phosphate is transferred to the NDP beta phosphate via a ping-pong mechanism, using a phosphorylated active-site intermediate. The chain is Nucleoside diphosphate kinase from Beijerinckia indica subsp. indica (strain ATCC 9039 / DSM 1715 / NCIMB 8712).